We begin with the raw amino-acid sequence, 833 residues long: Protein translocase subunit SecA (833 aa).

ATP contacts are provided by residues Q87, 105 to 109 (GEGKT), and D494. A disordered region spans residues 789–816 (PAAVAYSGGEAEAGPAQPHREDPKVGRN). Residues 806-815 (PHREDPKVGR) show a composition bias toward basic and acidic residues. C819, C821, C830, and C831 together coordinate Zn(2+).

Belongs to the SecA family. Monomer and homodimer. Part of the essential Sec protein translocation apparatus which comprises SecA, SecYEG and auxiliary proteins SecDF-YajC and YidC. Zn(2+) serves as cofactor.

It localises to the cell inner membrane. Its subcellular location is the cytoplasm. The enzyme catalyses ATP + H2O + cellular proteinSide 1 = ADP + phosphate + cellular proteinSide 2.. Part of the Sec protein translocase complex. Interacts with the SecYEG preprotein conducting channel. Has a central role in coupling the hydrolysis of ATP to the transfer of proteins into and across the cell membrane, serving as an ATP-driven molecular motor driving the stepwise translocation of polypeptide chains across the membrane. The chain is Protein translocase subunit SecA from Nitratidesulfovibrio vulgaris (strain ATCC 29579 / DSM 644 / CCUG 34227 / NCIMB 8303 / VKM B-1760 / Hildenborough) (Desulfovibrio vulgaris).